The sequence spans 102 residues: Small ribosomal subunit protein uS10 (102 aa).

Residues 30–58 (TGVNLSGPIPLPTKTLEIPTRKSPDGEGT) are disordered.

The protein belongs to the universal ribosomal protein uS10 family. Part of the 30S ribosomal subunit.

Its function is as follows. Involved in the binding of tRNA to the ribosomes. The sequence is that of Small ribosomal subunit protein uS10 from Haloquadratum walsbyi (strain DSM 16790 / HBSQ001).